A 240-amino-acid chain; its full sequence is 1-acyl-sn-glycerol-3-phosphate acyltransferase (240 aa).

An HXXXXD motif motif is present at residues 73 to 78; the sequence is HQNNYD.

Belongs to the 1-acyl-sn-glycerol-3-phosphate acyltransferase family.

It is found in the cell inner membrane. The enzyme catalyses a 1-acyl-sn-glycero-3-phosphate + an acyl-CoA = a 1,2-diacyl-sn-glycero-3-phosphate + CoA. It participates in phospholipid metabolism; CDP-diacylglycerol biosynthesis; CDP-diacylglycerol from sn-glycerol 3-phosphate: step 2/3. Functionally, converts lysophosphatidic acid (LPA) into phosphatidic acid by incorporating acyl moiety at the 2 position. The chain is 1-acyl-sn-glycerol-3-phosphate acyltransferase (plsC) from Haemophilus influenzae (strain ATCC 51907 / DSM 11121 / KW20 / Rd).